Here is a 278-residue protein sequence, read N- to C-terminus: 3-methyl-2-oxobutanoate hydroxymethyltransferase (278 aa).

2 residues coordinate Mg(2+): Asp43 and Asp82. 3-methyl-2-oxobutanoate is bound by residues 43 to 44, Asp82, and Lys112; that span reads DS. Residue Glu114 participates in Mg(2+) binding. The Proton acceptor role is filled by Glu181.

Belongs to the PanB family. Homodecamer; pentamer of dimers. The cofactor is Mg(2+).

The protein resides in the cytoplasm. The catalysed reaction is 3-methyl-2-oxobutanoate + (6R)-5,10-methylene-5,6,7,8-tetrahydrofolate + H2O = 2-dehydropantoate + (6S)-5,6,7,8-tetrahydrofolate. The protein operates within cofactor biosynthesis; (R)-pantothenate biosynthesis; (R)-pantoate from 3-methyl-2-oxobutanoate: step 1/2. Functionally, catalyzes the reversible reaction in which hydroxymethyl group from 5,10-methylenetetrahydrofolate is transferred onto alpha-ketoisovalerate to form ketopantoate. The protein is 3-methyl-2-oxobutanoate hydroxymethyltransferase of Bacillus cereus (strain ATCC 14579 / DSM 31 / CCUG 7414 / JCM 2152 / NBRC 15305 / NCIMB 9373 / NCTC 2599 / NRRL B-3711).